The sequence spans 196 residues: Gastrula zinc finger protein XlCGF64.1 (196 aa).

7 C2H2-type zinc fingers span residues 6 to 28, 34 to 56, 62 to 84, 90 to 112, 118 to 140, 146 to 168, and 174 to 196; these read YECP…QRGH, FMCT…QFIH, YVCT…QRGH, FTCT…QFIH, YECT…QRGH, and LMCT…KLSH.

Belongs to the krueppel C2H2-type zinc-finger protein family.

It localises to the nucleus. May be involved in transcriptional regulation. The sequence is that of Gastrula zinc finger protein XlCGF64.1 from Xenopus laevis (African clawed frog).